The chain runs to 108 residues: Protein S100-A15A (108 aa).

The region spanning 53-88 (KEPYYITELFQAADKNKDNQICFDEFLYILGKLVKD) is the EF-hand domain. Ca(2+) is bound by residues D66, N68, D70, Q72, and E77.

Belongs to the S-100 family.

The polypeptide is Protein S100-A15A (S100A15A) (Pongo abelii (Sumatran orangutan)).